The chain runs to 233 residues: Probable septum site-determining protein MinC (233 aa).

The protein belongs to the MinC family. As to quaternary structure, interacts with MinD and FtsZ.

In terms of biological role, cell division inhibitor that blocks the formation of polar Z ring septums. Rapidly oscillates between the poles of the cell to destabilize FtsZ filaments that have formed before they mature into polar Z rings. Prevents FtsZ polymerization. The chain is Probable septum site-determining protein MinC from Proteus mirabilis (strain HI4320).